Here is a 602-residue protein sequence, read N- to C-terminus: Aryl hydrocarbon receptor protein 1 (602 aa).

The propeptide occupies 1 to 2; sequence MY. Residues 1 to 12 show a composition bias toward basic residues; that stretch reads MYASKRRQRNFK. Residues 1 to 28 are disordered; the sequence is MYASKRRQRNFKRVRDPPKQLTNTNPSK. 2 short sequence motifs (nuclear localization signal) span residues 5-8 and 28-33; these read KRRQ and KRHRER. The 54-residue stretch at 18 to 71 folds into the bHLH domain; it reads PKQLTNTNPSKRHRERLNGELETVAMLLPYDSSTISRLDKLSVLRLAVSFLQCK. Required for maintaining the overall integrity of the AHR:ARNT heterodimer and its transcriptional activity stretches follow at residues 41–73, 133–141, and 266–268; these read VAMLLPYDSSTISRLDKLSVLRLAVSFLQCKAH, SLKSLGGFI, and ICV. The short motif at 55–63 is the Nuclear export signal element; that stretch reads LDKLSVLRL. The PAS domain occupies 126–196; sequence ESNFEEISLK…QQLDSNFHIP (71 aa). A disordered region spans residues 440-467; sequence STSNSLFPSVPVPTPTTTKANRRRKENS.

Interacts with daf-21/hsp90. Interacts with aha-1. In terms of tissue distribution, expressed in many distinct neuronal cells including RMED, RMEV, RMEL and RMER. Functions in URX neurons to promote aggregation behavior.

It localises to the nucleus. Its function is as follows. Probable ligand-activated transcriptional activator. Acts as a transcriptional regulator in GABAergic motor neuron cell fate specification and development. Promotes cell-type-specific expression of guanylate cyclase genes that have key roles in aggregation behavior and hyperoxia avoidance. Has no role in carbon dioxide avoidance. The chain is Aryl hydrocarbon receptor protein 1 from Caenorhabditis elegans.